The chain runs to 745 residues: Copper-transporting ATPase (745 aa).

Positions 1–67 constitute an HMA domain; sequence MKESFYIEGM…LIEKLGYSPK (67 aa). At 1 to 83 the chain is on the cytoplasmic side; that stretch reads MKESFYIEGM…KKEFFSPNVK (83 aa). Cu cation contacts are provided by cysteine 12 and cysteine 15. The chain crosses the membrane as a helical span at residues 84 to 104; the sequence is LALAVIFTLFVVYLSMGAMLS. Residues 105-124 lie on the Extracellular side of the membrane; that stretch reads PSLLPKSLLAIDNHSNFLNA. A helical membrane pass occupies residues 125–144; that stretch reads CLQLIGTLIVMHWGRDFYIQ. Over 145–151 the chain is Cytoplasmic; that stretch reads GFKALWH. A helical membrane pass occupies residues 152–172; that stretch reads RQPNMSSLIAIGTSAALISSL. Residues 173–194 are Extracellular-facing; that stretch reads WQLYLVYTDHYTDQWSYGHYYF. Residues 195–215 form a helical membrane-spanning segment; the sequence is ESVCVILMFVMVGKRIENVSK. Over 216–343 the chain is Cytoplasmic; the sequence is DKALDAMQAL…KAEISRLADK (128 aa). A helical membrane pass occupies residues 344–366; it reads VSSVFVPSVIAIAILAFVVWLII. Topologically, residues 367-379 are extracellular; sequence APKPDFWWNFGIA. Residues 380–397 traverse the membrane as a helical segment; sequence LEVFVSVLVISCPCALGL. Topologically, residues 398 to 685 are cytoplasmic; the sequence is ATLMSILVAN…KLSQATIKNI (288 aa). Aspartate 435 serves as the catalytic 4-aspartylphosphate intermediate. Mg(2+) is bound by residues aspartate 631 and aspartate 635. The helical transmembrane segment at 686–705 threads the bilayer; the sequence is KENLFWAFCYNSVFIPLACG. Topologically, residues 706–716 are extracellular; that stretch reads VLYKANIMLSP. The helical transmembrane segment at 717–735 threads the bilayer; sequence AIAGLAMSLSSVSVVLNSQ. Over 736–745 the chain is Cytoplasmic; that stretch reads RLRNFKIKDH.

The protein belongs to the cation transport ATPase (P-type) (TC 3.A.3) family. Type IB subfamily.

The protein resides in the cell membrane. The catalysed reaction is Cu(2+)(in) + ATP + H2O = Cu(2+)(out) + ADP + phosphate + H(+). Functionally, probably involved in copper export. This Helicobacter pylori (Campylobacter pylori) protein is Copper-transporting ATPase (copA).